The primary structure comprises 1516 residues: Alpha-2-macroglobulin homolog (1516 aa).

The first 26 residues, 1 to 26, serve as a signal peptide directing secretion; sequence MSNLRRFSRSLAVAALVLLPFAAVQA.

Belongs to the protease inhibitor I39 (alpha-2-macroglobulin) family. Bacterial alpha-2-macroglobulin subfamily.

The protein is Alpha-2-macroglobulin homolog of Pseudomonas aeruginosa (strain ATCC 15692 / DSM 22644 / CIP 104116 / JCM 14847 / LMG 12228 / 1C / PRS 101 / PAO1).